The sequence spans 720 residues: ABC transporter G family member STR2 (720 aa).

The Cytoplasmic portion of the chain corresponds to M1–E467. The region spanning L25–K274 is the ABC transporter domain. G70–S77 is a binding site for ATP. Residues G313–Q346 are disordered. Residues S327–Q346 are compositionally biased toward basic and acidic residues. A helical transmembrane segment spans residues L468 to M488. At H489–S502 the chain is on the extracellular side. A helical membrane pass occupies residues F503–I523. Residues Q524–G547 lie on the Cytoplasmic side of the membrane. Residues L548 to F568 traverse the membrane as a helical segment. Topologically, residues A569–P575 are extracellular. A helical membrane pass occupies residues F576 to F596. Residues V597 to Y604 lie on the Cytoplasmic side of the membrane. A helical membrane pass occupies residues I605–F625. The Extracellular portion of the chain corresponds to L626–V693. A glycan (N-linked (GlcNAc...) asparagine) is linked at N681. The chain crosses the membrane as a helical span at residues Y694–F714. The Cytoplasmic segment spans residues S715–T720.

The protein belongs to the ABC transporter superfamily. ABCG family. Stunted arbuscule (STR) subfamily. Heterodimerizes with STR; the resulting transporter is located in the peri-arbuscular membrane.

The protein localises to the cell membrane. Its function is as follows. Together with STR, required for arbuscule development in arbuscular mycorrhizal (AM) symbiosis. This Petunia hybrida (Petunia) protein is ABC transporter G family member STR2.